A 453-amino-acid chain; its full sequence is Regulatory protein opaque-2 (453 aa).

A disordered region spans residues 145 to 243 (SSVVTSDQRS…SNRESARRSR (99 aa)). The segment covering 146 to 175 (SVVTSDQRSQGSNNHTGGSSIRNNPVQNKL) has biased composition (polar residues). A compositionally biased stretch (acidic residues) spans 207-216 (PSDEDMDGEV). A compositionally biased stretch (basic and acidic residues) spans 224 to 240 (PTEERVRKKESNRESAR). The region spanning 225-288 (TEERVRKKES…NDANVDNRVL (64 aa)) is the bZIP domain. Positions 228 to 251 (RVRKKESNRESARRSRYRKAAHLK) are basic motif. The leucine-zipper stretch occupies residues 253–274 (LEDQVAQLKAENSCLLRRIAAL).

The protein belongs to the bZIP family. Interacts with the Dof zinc finger protein PBF. In terms of tissue distribution, seed endosperm.

Its subcellular location is the nucleus. Involved in the regulation of the endosperm-specific production of albumin b-32 and other zein proteins. It is a trans-acting transcriptional activator that binds to the consensus sequence 5'-GATGAYRTGR-3'. This Zea mays (Maize) protein is Regulatory protein opaque-2 (O2).